The primary structure comprises 275 residues: Calcium-binding protein 4 (275 aa).

Polar residues predominate over residues 1 to 12 (MTTEQARGQQGP). Residues 1–112 (MTTEQARGQQ…SLHDAAQRTY (112 aa)) are disordered. The segment covering 38–55 (TRKRSKKERGLRGSRKRT) has biased composition (basic residues). A Phosphoserine modification is found at serine 42. 4 consecutive EF-hand domains span residues 129–164 (EELD…LGYM), 183–200 (GRVD…KLRE), 206–241 (LGVR…LLGE), and 243–275 (LAGP…LSRH). Ca(2+)-binding residues include aspartate 142, aspartate 144, aspartate 146, tyrosine 148, and glutamate 153. Ca(2+) is bound by residues aspartate 219, aspartate 221, aspartate 223, arginine 225, glutamate 230, aspartate 256, asparagine 258, aspartate 260, threonine 262, and glutamate 267.

As to quaternary structure, interacts with CACNA1F and CACNA1D (via IQ domain) in a calcium independent manner. Interacts (via N-terminus) with UNC119. In terms of processing, phosphorylated. Phosphorylation levels change with the light conditions and regulate the activity. In terms of tissue distribution, expressed in retina and in the inner hair cells (IHC) of the cochlea.

The protein localises to the cytoplasm. Its subcellular location is the presynapse. Its function is as follows. Involved in normal synaptic function through regulation of Ca(2+) influx and neurotransmitter release in photoreceptor synaptic terminals and in auditory transmission. Modulator of CACNA1D and CACNA1F, suppressing the calcium-dependent inactivation and shifting the activation range to more hyperpolarized voltages. The polypeptide is Calcium-binding protein 4 (CABP4) (Homo sapiens (Human)).